Reading from the N-terminus, the 306-residue chain is HORMA domain-containing protein 2 (306 aa).

Residues 29-232 (HESLVVVKKL…SGFHSMKVKV (204 aa)) enclose the HORMA domain. Position 271 is a phosphoserine (Ser-271).

Interacts with HORMAD1. Post-translationally, phosphorylated in a SPO11-dependent manner. In terms of tissue distribution, specifically expressed in meiotic germ cells.

The protein resides in the nucleus. The protein localises to the chromosome. In terms of biological role, essential for synapsis surveillance during meiotic prophase via the recruitment of ATR activity. Plays a key role in the male mid-pachytene checkpoint and the female meiotic prophase checkpoint: required for efficient build-up of ATR activity on unsynapsed chromosome regions, a process believed to form the basis of meiotic silencing of unsynapsed chromatin (MSUC) and meiotic prophase quality control in both sexes. Required for the DNA double-strand break-independent, BRCA1-dependent activation of ATR on the sex chromosomes that is essential for normal sex body formation. This Mus musculus (Mouse) protein is HORMA domain-containing protein 2 (Hormad2).